The sequence spans 369 residues: MATLDVNPELYQAQLADKIARLKAMFVDYSMPELEVFESPVANYRMRAEFRIWHEGDDMYYIMFNQETREKYRVDQFPAASRLINDLMPLLMDAMKGSPILRHKLFQVDFLSTLSGEILVSLLYHRQLSEEWITAAQALKQRLNDEGFNLNLIGRARKMKVVLDRDYVVENLQVNGQPYVYKQVENSFTQPNAKVAEKMLEWAVDCTQESKGDLLELYCGNGNFSLALAQNFERVLATELAKPSVEAAQFNIAANQIGNVQIIRMSAEEFTQAMEGKREFNRLKDAGVDLQSYRCNTIFVDPPRSGMDIDTCKMVQGYERILYISCNPETLQENLQVLGETHQVVRFALFDQFPYTHHMEAGVMLERKK.

Gln-190, Tyr-218, Asn-223, Glu-239, and Asp-301 together coordinate S-adenosyl-L-methionine. Cys-326 acts as the Nucleophile in catalysis. Glu-360 serves as the catalytic Proton acceptor.

It belongs to the class I-like SAM-binding methyltransferase superfamily. RNA M5U methyltransferase family. TrmA subfamily.

It carries out the reaction uridine(54) in tRNA + S-adenosyl-L-methionine = 5-methyluridine(54) in tRNA + S-adenosyl-L-homocysteine + H(+). The catalysed reaction is uridine(341) in tmRNA + S-adenosyl-L-methionine = 5-methyluridine(341) in tmRNA + S-adenosyl-L-homocysteine + H(+). Its function is as follows. Dual-specificity methyltransferase that catalyzes the formation of 5-methyluridine at position 54 (m5U54) in all tRNAs, and that of position 341 (m5U341) in tmRNA (transfer-mRNA). The protein is tRNA/tmRNA (uracil-C(5))-methyltransferase of Vibrio cholerae serotype O1 (strain ATCC 39541 / Classical Ogawa 395 / O395).